A 423-amino-acid polypeptide reads, in one-letter code: Levansucrase (423 aa).

5 residues coordinate sucrose: Trp-47, Asp-48, Ser-119, Arg-193, and Asp-194. The active-site Nucleophile is the Asp-48. The Proton donor/acceptor role is filled by Glu-278.

Belongs to the glycosyl hydrolase 68 family.

The protein localises to the secreted. It carries out the reaction [6)-beta-D-fructofuranosyl-(2-&gt;](n) alpha-D-glucopyranoside + sucrose = [6)-beta-D-fructofuranosyl-(2-&gt;](n+1) alpha-D-glucopyranoside + D-glucose. Functionally, catalyzes the synthesis of levan, a fructose polymer, by transferring the fructosyl moiety from sucrose to a growing acceptor molecule. This chain is Levansucrase, found in Zymomonas mobilis subsp. mobilis (strain ATCC 10988 / DSM 424 / LMG 404 / NCIMB 8938 / NRRL B-806 / ZM1).